Consider the following 900-residue polypeptide: Bifunctional uridylyltransferase/uridylyl-removing enzyme (900 aa).

Positions 1–342 (MPQVDPELFD…PCEQPVQIQP (342 aa)) are uridylyltransferase. The uridylyl-removing stretch occupies residues 343–705 (LNSRFQLRDG…TTQREFESGS (363 aa)). Positions 461–583 (VDAHTLNLIK…VGDQTHLDYL (123 aa)) constitute an HD domain. 2 consecutive ACT domains span residues 706–789 (QIFI…IIQR) and 816–891 (VLEV…DNGR).

It belongs to the GlnD family. Mg(2+) serves as cofactor.

It carries out the reaction [protein-PII]-L-tyrosine + UTP = [protein-PII]-uridylyl-L-tyrosine + diphosphate. The catalysed reaction is [protein-PII]-uridylyl-L-tyrosine + H2O = [protein-PII]-L-tyrosine + UMP + H(+). With respect to regulation, uridylyltransferase (UTase) activity is inhibited by glutamine, while glutamine activates uridylyl-removing (UR) activity. Its function is as follows. Modifies, by uridylylation and deuridylylation, the PII regulatory proteins (GlnB and homologs), in response to the nitrogen status of the cell that GlnD senses through the glutamine level. Under low glutamine levels, catalyzes the conversion of the PII proteins and UTP to PII-UMP and PPi, while under higher glutamine levels, GlnD hydrolyzes PII-UMP to PII and UMP (deuridylylation). Thus, controls uridylylation state and activity of the PII proteins, and plays an important role in the regulation of nitrogen assimilation and metabolism. The sequence is that of Bifunctional uridylyltransferase/uridylyl-removing enzyme from Pseudomonas aeruginosa (strain LESB58).